The chain runs to 202 residues: LexA repressor 2 (202 aa).

Positions 28 to 48 (LAEISEAFGFASRSVARKHIV) form a DNA-binding region, H-T-H motif. Active-site for autocatalytic cleavage activity residues include serine 123 and lysine 160.

The protein belongs to the peptidase S24 family. As to quaternary structure, homodimer.

The catalysed reaction is Hydrolysis of Ala-|-Gly bond in repressor LexA.. Functionally, represses a number of genes involved in the response to DNA damage (SOS response), including recA and lexA. In the presence of single-stranded DNA, RecA interacts with LexA causing an autocatalytic cleavage which disrupts the DNA-binding part of LexA, leading to derepression of the SOS regulon and eventually DNA repair. This Pseudomonas syringae pv. tomato (strain ATCC BAA-871 / DC3000) protein is LexA repressor 2.